We begin with the raw amino-acid sequence, 401 residues long: Protein KlcB (401 aa).

The interval 253–311 (AARSNAKGKAGGRERDPASAETAMRCSTAKADDCKAEAGPVSPEATMPGAGEASCSTAR) is disordered.

The polypeptide is Protein KlcB (klcB) (Escherichia coli).